Here is a 251-residue protein sequence, read N- to C-terminus: Large ribosomal subunit protein uL3 (251 aa).

2 disordered regions span residues 140–162 and 229–251; these read SHRSIGSTGGRQDPGKTFKNKKM and AAPAGAVQAAQAAPEAPAAEENA. An N5-methylglutamine modification is found at glutamine 151.

The protein belongs to the universal ribosomal protein uL3 family. In terms of assembly, part of the 50S ribosomal subunit. Forms a cluster with proteins L14 and L19. Methylated by PrmB.

Its function is as follows. One of the primary rRNA binding proteins, it binds directly near the 3'-end of the 23S rRNA, where it nucleates assembly of the 50S subunit. This chain is Large ribosomal subunit protein uL3, found in Methylobacterium nodulans (strain LMG 21967 / CNCM I-2342 / ORS 2060).